Here is a 1301-residue protein sequence, read N- to C-terminus: Tyrosine-protein phosphatase 99A (1301 aa).

A signal peptide spans 1–28; that stretch reads MPRPQHHALLRAMLKLLLFASIAEHCAT. The Extracellular segment spans residues 29 to 394; that stretch reads ALPTNSSNSP…RQSHNDYNLA (366 aa). The tract at residues 31–63 is disordered; that stretch reads PTNSSNSPSSPSPFTVASLPPTTASSSSSPAVI. N-linked (GlcNAc...) asparagine glycosylation occurs at Asn33. The segment covering 33–63 has biased composition (low complexity); it reads NSSNSPSSPSPFTVASLPPTTASSSSSPAVI. Fibronectin type-III domains are found at residues 66–165, 173–269, and 270–376; these read SSFD…YAAV, KPQN…TDVG, and GPSA…LQPN. 5 N-linked (GlcNAc...) asparagine glycosylation sites follow: Asn176, Asn212, Asn278, Asn322, and Asn336. Residues 395 to 415 form a helical membrane-spanning segment; it reads VLVGIIFSCFGIILIIMAFFL. The Cytoplasmic segment spans residues 416–1301; it reads WSRKCFHAAY…TDAQNLDIVG (886 aa). 2 Tyrosine-protein phosphatase domains span residues 476-741 and 764-1016; these read FSRE…LVEA and LEQQ…LSFL. Catalysis depends on Cys682, which acts as the Phosphocysteine intermediate. Residues 1092–1106 show a composition bias toward polar residues; sequence TALNETVSTPSTDTN. Disordered regions lie at residues 1092-1199 and 1257-1281; these read TALN…PTIP and VGDL…NNHI. Over residues 1107 to 1130 the composition is skewed to low complexity; that stretch reads PSLLPILSLLPPTVAPLSSSSSTT. Positions 1131-1142 are enriched in pro residues; that stretch reads PPTPSTPTPQPP. The span at 1150–1161 shows a compositional bias: polar residues; the sequence is HSPSDLSHQISS. Residues 1162-1188 are compositionally biased toward low complexity; the sequence is TVANAASPVTPATASASAGATPTTPMT. Residues 1264–1273 are compositionally biased toward polar residues; that stretch reads NADNSPTASP.

Belongs to the protein-tyrosine phosphatase family. Receptor class subfamily. As to expression, selectively expressed in a subset of axons and pioneer neurons (including aCC and RP2) in the embryo.

The protein localises to the membrane. It catalyses the reaction O-phospho-L-tyrosyl-[protein] + H2O = L-tyrosyl-[protein] + phosphate. In terms of biological role, may play a key role in signal transduction and growth control. May have a role in the establishment of the intersegmental and segmental nerves. The protein is Tyrosine-protein phosphatase 99A (Ptp99A) of Drosophila melanogaster (Fruit fly).